We begin with the raw amino-acid sequence, 125 residues long: Large ribosomal subunit protein bL12 (125 aa).

It belongs to the bacterial ribosomal protein bL12 family. In terms of assembly, homodimer. Part of the ribosomal stalk of the 50S ribosomal subunit. Forms a multimeric L10(L12)X complex, where L10 forms an elongated spine to which 2 to 4 L12 dimers bind in a sequential fashion. Binds GTP-bound translation factors.

Forms part of the ribosomal stalk which helps the ribosome interact with GTP-bound translation factors. Is thus essential for accurate translation. The protein is Large ribosomal subunit protein bL12 of Rhizobium leguminosarum bv. trifolii (strain WSM2304).